A 195-amino-acid chain; its full sequence is Imidazoleglycerol-phosphate dehydratase (195 aa).

This sequence belongs to the imidazoleglycerol-phosphate dehydratase family.

Its subcellular location is the cytoplasm. The catalysed reaction is D-erythro-1-(imidazol-4-yl)glycerol 3-phosphate = 3-(imidazol-4-yl)-2-oxopropyl phosphate + H2O. It participates in amino-acid biosynthesis; L-histidine biosynthesis; L-histidine from 5-phospho-alpha-D-ribose 1-diphosphate: step 6/9. The polypeptide is Imidazoleglycerol-phosphate dehydratase (Burkholderia vietnamiensis (strain G4 / LMG 22486) (Burkholderia cepacia (strain R1808))).